A 102-amino-acid polypeptide reads, in one-letter code: Large ribosomal subunit protein bL21 (102 aa).

Residues 80-91 (KNSKRKKGHRQP) are compositionally biased toward basic residues. The segment at 80-102 (KNSKRKKGHRQPYTKLTIDKINA) is disordered.

The protein belongs to the bacterial ribosomal protein bL21 family. As to quaternary structure, part of the 50S ribosomal subunit. Contacts protein L20.

Its function is as follows. This protein binds to 23S rRNA in the presence of protein L20. The protein is Large ribosomal subunit protein bL21 of Staphylococcus aureus (strain Mu3 / ATCC 700698).